Reading from the N-terminus, the 476-residue chain is Proline--tRNA ligase (476 aa).

This sequence belongs to the class-II aminoacyl-tRNA synthetase family. ProS type 3 subfamily. In terms of assembly, homodimer.

The protein resides in the cytoplasm. The catalysed reaction is tRNA(Pro) + L-proline + ATP = L-prolyl-tRNA(Pro) + AMP + diphosphate. Functionally, catalyzes the attachment of proline to tRNA(Pro) in a two-step reaction: proline is first activated by ATP to form Pro-AMP and then transferred to the acceptor end of tRNA(Pro). The chain is Proline--tRNA ligase from Mycoplasmopsis pulmonis (strain UAB CTIP) (Mycoplasma pulmonis).